We begin with the raw amino-acid sequence, 560 residues long: 2-hydroxyacyl-CoA lyase (560 aa).

Thiamine diphosphate is bound at residue Glu-49. Mg(2+)-binding residues include Asp-446 and Asn-473. The short motif at 558–560 (PRL) is the Peroxisomal target signal 1 (PTS1) element.

The protein belongs to the TPP enzyme family. Mg(2+) serves as cofactor. The cofactor is thiamine diphosphate.

It localises to the cytoplasm. It is found in the peroxisome matrix. It carries out the reaction an (R)-2-hydroxy-long-chain-fatty acyl-CoA = a long-chain fatty aldehyde + formyl-CoA. It catalyses the reaction a 2-hydroxy-3-methyl fatty acyl-CoA = a 2-methyl-branched fatty aldehyde + formyl-CoA. Its function is as follows. Catalyzes a carbon-carbon cleavage reaction; cleaves a 2-hydroxy-3-methylacyl-CoA into formyl-CoA and a 2-methyl-branched fatty aldehyde. This chain is 2-hydroxyacyl-CoA lyase, found in Saccharomyces cerevisiae (strain ATCC 204508 / S288c) (Baker's yeast).